The primary structure comprises 195 residues: ATP-dependent Clp protease proteolytic subunit (195 aa).

Residue Ser-102 is the Nucleophile of the active site. The active site involves His-125.

It belongs to the peptidase S14 family. In terms of assembly, component of the chloroplastic Clp protease core complex.

It is found in the plastid. The protein localises to the chloroplast stroma. The enzyme catalyses Hydrolysis of proteins to small peptides in the presence of ATP and magnesium. alpha-casein is the usual test substrate. In the absence of ATP, only oligopeptides shorter than five residues are hydrolyzed (such as succinyl-Leu-Tyr-|-NHMec, and Leu-Tyr-Leu-|-Tyr-Trp, in which cleavage of the -Tyr-|-Leu- and -Tyr-|-Trp bonds also occurs).. In terms of biological role, cleaves peptides in various proteins in a process that requires ATP hydrolysis. Has a chymotrypsin-like activity. Plays a major role in the degradation of misfolded proteins. The chain is ATP-dependent Clp protease proteolytic subunit from Phaseolus vulgaris (Kidney bean).